The sequence spans 316 residues: PDZ and LIM domain protein 3 (316 aa).

The 84-residue stretch at 1–84 (MPQNVVLPGP…QLCLKIDRAE (84 aa)) folds into the PDZ domain. Phosphoserine is present on residues S18 and S93. The residue at position 164 (R164) is an Omega-N-methylarginine. The region spanning 244–303 (PLCDKCGSGIVGAVVKARDKYRHPECFVCADCNLNLKQKGYFFVEGELYCETHARARTRP) is the LIM zinc-binding domain.

In terms of assembly, interacts with ACTN2. Forms a heterodimer with PDLIM4 (via LIM domain).

It localises to the cytoplasm. It is found in the myofibril. Its subcellular location is the sarcomere. The protein localises to the z line. Functionally, may play a role in the organization of actin filament arrays within muscle cells. The chain is PDZ and LIM domain protein 3 (Pdlim3) from Mus musculus (Mouse).